The chain runs to 372 residues: Protein phosphatase Mn(2+)-dependent 1K (372 aa).

The N-terminal 29 residues, 1-29 (MLSAAFITLLRSGGNQVKKRVLLSSILLQ), are a transit peptide targeting the mitochondrion. The segment at 46–61 (RCSRFDPDGSGQPATW) is critical for association with the BCKDH complex. Residues 94–346 (NVGCASLIGK…DNSTAVVVPF (253 aa)) enclose the PPM-type phosphatase domain. Residues aspartate 127 and glycine 128 each coordinate Mn(2+). Serine 248 carries the post-translational modification Phosphoserine. Mn(2+) contacts are provided by aspartate 298 and aspartate 337.

This sequence belongs to the PP2C family. Monomer. Interacts with E1 and E2 components of the branched-chain alpha-ketoacid dehydrogenase (BCKDH) complex; this interaction requires colocalization in mitochondria. Interacts with BCKDHA but not with BCKDHB of the E1 component. Interacts with the 24-meric E2 core composed of DBT monomers with a 24:1 stoichiometry; the N-terminal region (residues 49-61) of PPM1K and C-terminal linker of the lipoyl domain of DBT (residues 145-160) are critical for this interaction, whereas the lipoyl prosthetic group is dispensable. Competes with BCKDK for binding to the E2 core; this interaction is modulated by branched-chain alpha-keto acids. At steady state, BCKDH holoenzyme preferentially binds BCKDK and BCKDHA is phosphorylated. In response to high levels of branched-chain alpha-keto acids, the inhibitory BCKDK is replaced by activating PPM1K leading to BCKDHA dephosphorylation and BCAA degradation. It depends on Mn(2+) as a cofactor. Highly expressed in the heart, kidney, brain and liver and to a lesser extent in testis, lung, spleen and adipose tissue. Very low amount in muscle (at protein level). Also expressed in the thymus (at protein level) and the diaphragm. Significantly reduced in hypertrophied hearts.

It localises to the mitochondrion matrix. The catalysed reaction is O-phospho-L-seryl-[3-methyl-2-oxobutanoate dehydrogenase] + H2O = L-seryl-[3-methyl-2-oxobutanoate dehydrogenase] + phosphate. It catalyses the reaction O-phospho-L-seryl-[protein] + H2O = L-seryl-[protein] + phosphate. The protein operates within protein modification. Functionally, serine/threonine-protein phosphatase component of macronutrients metabolism. Forms a functional kinase and phosphatase pair with BCKDK, serving as a metabolic regulatory node that coordinates branched-chain amino acids (BCAAs) with glucose and lipid metabolism via two distinct phosphoprotein targets: mitochondrial BCKDHA subunit of the branched-chain alpha-ketoacid dehydrogenase (BCKDH) complex and cytosolic ACLY, a lipogenic enzyme of Krebs cycle. At high levels of branched-chain ketoacids, dephosphorylates and activates mitochondrial BCKDH complex, a multisubunit complex consisting of three multimeric components each involved in different steps of BCAA catabolism: E1 composed of BCKDHA and BCKDHB, E2 core composed of DBT monomers, and E3 composed of DLD monomers. Tightly associates with the E2 component of BCKDH complex and dephosphorylates BCKDHA on Ser-334. Regulates the reversible phosphorylation of ACLY in response to changes in cellular carbohydrate abundance such as occurs during fasting to feeding metabolic transition. At fasting state, appears to dephosphorylate ACLY on Ser-455 and inactivate it. Refeeding stimulates MLXIPL/ChREBP transcription factor, leading to increased BCKDK to PPM1K expression ratio, phosphorylation and activation of ACLY that ultimately results in the generation of malonyl-CoA and oxaloacetate immediate substrates of de novo lipogenesis and gluconeogenesis, respectively. Recognizes phosphosites having SxS or RxxS motifs and strictly depends on Mn(2+) ions for the phosphatase activity. Regulates Ca(2+)-induced opening of mitochondrial transition pore and apoptotic cell death. The sequence is that of Protein phosphatase Mn(2+)-dependent 1K from Mus musculus (Mouse).